The following is a 120-amino-acid chain: Large ribosomal subunit protein bL20c (120 aa).

The protein belongs to the bacterial ribosomal protein bL20 family.

The protein resides in the plastid. In terms of biological role, binds directly to 23S ribosomal RNA and is necessary for the in vitro assembly process of the 50S ribosomal subunit. It is not involved in the protein synthesizing functions of that subunit. This is Large ribosomal subunit protein bL20c from Cuscuta obtusiflora (Peruvian dodder).